Reading from the N-terminus, the 151-residue chain is Putative membrane protein ORF10 (151 aa).

The next 2 membrane-spanning stretches (helical) occupy residues 7-23 (LCLAFGVTLIVIVGVVV) and 107-123 (GLVAAFNGFWLSFIIMY).

Its subcellular location is the membrane. This is Putative membrane protein ORF10 (ORF10) from Ictalurid herpesvirus 1 (strain Auburn) (IcHV-1).